The sequence spans 276 residues: C-type lectin domain family 12 member B (276 aa).

Over 1–43 (MSEDMTYATLTFQDSVAAGNNQDRNNLRKRGYPAPSSIWRQAA) the chain is Cytoplasmic. Residues 5–10 (MTYATL) carry the ITIM motif motif. At Tyr-7 the chain carries Phosphotyrosine. Residues 44–64 (LGLLTLCVMLLIGLVTLGIMF) form a helical; Signal-anchor for type II membrane protein membrane-spanning segment. The Extracellular segment spans residues 65–276 (LQMSSEINSD…AALVKIEDLD (212 aa)). N-linked (GlcNAc...) asparagine glycosylation is found at Asn-91, Asn-176, and Asn-237. The C-type lectin domain maps to 150–264 (YQTSCYYFAV…CSAEISWICE (115 aa)). Intrachain disulfides connect Cys-172–Cys-263 and Cys-242–Cys-255.

In terms of assembly, homodimer. Interacts (via ITIM motif) with PTPN6. Interacts (via ITIM motif) with PTPN11; this interaction triggers dephosphorylation and activation of PTPN11.

The protein resides in the cell membrane. In terms of biological role, inhibitory receptor postulated to negatively regulate immune and non-immune functions. Upon phosphorylation, recruits SH2 domain-containing PTPN6 and PTPN11 phosphatases to its ITIM motif and antagonizes activation signals. Although it inhibits KLRK1/NKG2D-mediated signaling, it does not bind known ligands of KLRK1/NKG2D and therefore is not its inhibitory counterpart. May limit activation of myeloid cell subsets in response to infection or tissue inflammation. May protect target cells against natural killer cell-mediated lysis. May negatively regulate cell cycle and differentiation of melanocytes via inactivation of STAT3. This chain is C-type lectin domain family 12 member B (CLEC12B), found in Bos taurus (Bovine).